The sequence spans 147 residues: Nucleoside diphosphate kinase (147 aa).

6 residues coordinate ATP: Lys9, Phe57, Arg85, Thr91, Arg102, and Asn112. Residue His115 is the Pros-phosphohistidine intermediate of the active site.

It belongs to the NDK family. The cofactor is Mg(2+).

It localises to the cytoplasm. It catalyses the reaction a 2'-deoxyribonucleoside 5'-diphosphate + ATP = a 2'-deoxyribonucleoside 5'-triphosphate + ADP. It carries out the reaction a ribonucleoside 5'-diphosphate + ATP = a ribonucleoside 5'-triphosphate + ADP. Its function is as follows. Major role in the synthesis of nucleoside triphosphates other than ATP. The ATP gamma phosphate is transferred to the NDP beta phosphate via a ping-pong mechanism, using a phosphorylated active-site intermediate. The sequence is that of Nucleoside diphosphate kinase from Thermoplasma volcanium (strain ATCC 51530 / DSM 4299 / JCM 9571 / NBRC 15438 / GSS1).